A 234-amino-acid chain; its full sequence is Carboxy-S-adenosyl-L-methionine synthase (234 aa).

S-adenosyl-L-methionine is bound by residues Tyr-35, 60 to 62 (GCS), 83 to 84 (DN), 109 to 110 (DI), Asn-124, and Arg-191.

Belongs to the class I-like SAM-binding methyltransferase superfamily. Cx-SAM synthase family. Homodimer.

The enzyme catalyses prephenate + S-adenosyl-L-methionine = carboxy-S-adenosyl-L-methionine + 3-phenylpyruvate + H2O. Catalyzes the conversion of S-adenosyl-L-methionine (SAM) to carboxy-S-adenosyl-L-methionine (Cx-SAM). This chain is Carboxy-S-adenosyl-L-methionine synthase, found in Campylobacter hominis (strain ATCC BAA-381 / DSM 21671 / CCUG 45161 / LMG 19568 / NCTC 13146 / CH001A).